Reading from the N-terminus, the 306-residue chain is Methionyl-tRNA formyltransferase (306 aa).

(6S)-5,6,7,8-tetrahydrofolate is bound at residue 105-108 (SLLP).

This sequence belongs to the Fmt family.

The enzyme catalyses L-methionyl-tRNA(fMet) + (6R)-10-formyltetrahydrofolate = N-formyl-L-methionyl-tRNA(fMet) + (6S)-5,6,7,8-tetrahydrofolate + H(+). Its function is as follows. Attaches a formyl group to the free amino group of methionyl-tRNA(fMet). The formyl group appears to play a dual role in the initiator identity of N-formylmethionyl-tRNA by promoting its recognition by IF2 and preventing the misappropriation of this tRNA by the elongation apparatus. In Rubrobacter xylanophilus (strain DSM 9941 / JCM 11954 / NBRC 16129 / PRD-1), this protein is Methionyl-tRNA formyltransferase.